A 285-amino-acid polypeptide reads, in one-letter code: Phosphatidylserine decarboxylase proenzyme (285 aa).

Active-site charge relay system; for autoendoproteolytic cleavage activity residues include Asp-96, His-152, and Ser-250. Residue Ser-250 is the Schiff-base intermediate with substrate; via pyruvic acid; for decarboxylase activity of the active site. Ser-250 carries the post-translational modification Pyruvic acid (Ser); by autocatalysis.

It belongs to the phosphatidylserine decarboxylase family. PSD-B subfamily. Prokaryotic type I sub-subfamily. In terms of assembly, heterodimer of a large membrane-associated beta subunit and a small pyruvoyl-containing alpha subunit. Pyruvate is required as a cofactor. Is synthesized initially as an inactive proenzyme. Formation of the active enzyme involves a self-maturation process in which the active site pyruvoyl group is generated from an internal serine residue via an autocatalytic post-translational modification. Two non-identical subunits are generated from the proenzyme in this reaction, and the pyruvate is formed at the N-terminus of the alpha chain, which is derived from the carboxyl end of the proenzyme. The autoendoproteolytic cleavage occurs by a canonical serine protease mechanism, in which the side chain hydroxyl group of the serine supplies its oxygen atom to form the C-terminus of the beta chain, while the remainder of the serine residue undergoes an oxidative deamination to produce ammonia and the pyruvoyl prosthetic group on the alpha chain. During this reaction, the Ser that is part of the protease active site of the proenzyme becomes the pyruvoyl prosthetic group, which constitutes an essential element of the active site of the mature decarboxylase.

The protein localises to the cell membrane. The catalysed reaction is a 1,2-diacyl-sn-glycero-3-phospho-L-serine + H(+) = a 1,2-diacyl-sn-glycero-3-phosphoethanolamine + CO2. It participates in phospholipid metabolism; phosphatidylethanolamine biosynthesis; phosphatidylethanolamine from CDP-diacylglycerol: step 2/2. Its function is as follows. Catalyzes the formation of phosphatidylethanolamine (PtdEtn) from phosphatidylserine (PtdSer). This Acinetobacter baylyi (strain ATCC 33305 / BD413 / ADP1) protein is Phosphatidylserine decarboxylase proenzyme.